Consider the following 524-residue polypeptide: Histidine ammonia-lyase (524 aa).

The segment at residues 139-141 is a cross-link (5-imidazolinone (Ala-Gly)); the sequence is ASG. Ser-140 is modified (2,3-didehydroalanine (Ser)). Residues 500–524 form a disordered region; that stretch reads ADTQAPAPAKLPDSGDEDRDTTSRH.

It belongs to the PAL/histidase family. In terms of processing, contains an active site 4-methylidene-imidazol-5-one (MIO), which is formed autocatalytically by cyclization and dehydration of residues Ala-Ser-Gly.

The protein resides in the cytoplasm. It catalyses the reaction L-histidine = trans-urocanate + NH4(+). It functions in the pathway amino-acid degradation; L-histidine degradation into L-glutamate; N-formimidoyl-L-glutamate from L-histidine: step 1/3. The polypeptide is Histidine ammonia-lyase (hutH) (Deinococcus radiodurans (strain ATCC 13939 / DSM 20539 / JCM 16871 / CCUG 27074 / LMG 4051 / NBRC 15346 / NCIMB 9279 / VKM B-1422 / R1)).